Here is a 232-residue protein sequence, read N- to C-terminus: Glutathione S-transferase E14 (232 aa).

Residues 4 to 85 (PKPILYYDER…HLAEKFDEGG (82 aa)) form the GST N-terminal domain. A GST C-terminal domain is found at 91 to 218 (EHAERMKVLN…RQTMESVGSF (128 aa)).

It belongs to the GST superfamily. Epsilon family. As to expression, expressed in the adult ovary (at protein level).

The enzyme catalyses RX + glutathione = an S-substituted glutathione + a halide anion + H(+). Functionally, conjugation of reduced glutathione to a wide number of exogenous and endogenous hydrophobic electrophiles. Essential for ecdysteroid biosynthesis. May be involved in detoxification. This Drosophila melanogaster (Fruit fly) protein is Glutathione S-transferase E14.